The chain runs to 563 residues: Arginine--tRNA ligase (563 aa).

Positions 122–132 (PNIAKPMSMGH) match the 'HIGH' region motif.

This sequence belongs to the class-I aminoacyl-tRNA synthetase family. As to quaternary structure, monomer.

The protein localises to the cytoplasm. It catalyses the reaction tRNA(Arg) + L-arginine + ATP = L-arginyl-tRNA(Arg) + AMP + diphosphate. The protein is Arginine--tRNA ligase of Levilactobacillus brevis (strain ATCC 367 / BCRC 12310 / CIP 105137 / JCM 1170 / LMG 11437 / NCIMB 947 / NCTC 947) (Lactobacillus brevis).